The following is a 420-amino-acid chain: Dynein axonemal assembly factor 4 (420 aa).

The 85-residue stretch at 3–87 (VRVSEFSWQQ…KEPVLWDSLS (85 aa)) folds into the CS domain. The tract at residues 7 to 103 (EFSWQQTPAT…EMMQRIREKS (97 aa)) is mediates interaction with ESR1 and STUB1. Basic and acidic residues predominate over residues 164–192 (ECQKKADGQKRVQRKEKPLEGKQAEETKA). Positions 164-212 (ECQKKADGQKRVQRKEKPLEGKQAEETKALKPRGLPRKAPPTRLPTRGR) are disordered. TPR repeat units follow at residues 288 to 321 (PDWLKDKGNKLFATENYLAAVDAYNLAIRLNCKI), 322 to 355 (PLLYLNRAACHLKLKNLHKAIEDSSKALELLTPP), and 364 to 397 (MKAHVRRGTAFCQLELYVEGLQDYEAALKIDPAN).

As to quaternary structure, interacts with ZMYND10. Interacts with ESR1 and ESR2. Interacts with STUB1. Interacts with DNAAF2. Interacts with CCT3, CCT4, CCT5 and CCT8. Interacts with DNAAF6/PIH1D3.

The protein localises to the nucleus. It is found in the cytoplasm. It localises to the dynein axonemal particle. The protein resides in the cell projection. Its subcellular location is the neuron projection. Involved in neuronal migration during development of the cerebral neocortex. May regulate the stability and proteasomal degradation of the estrogen receptors that play an important role in neuronal differentiation, survival and plasticity. Axonemal dynein assembly factor required for ciliary motility. This is Dynein axonemal assembly factor 4 from Mus musculus (Mouse).